We begin with the raw amino-acid sequence, 460 residues long: ATP synthase subunit beta (460 aa).

150 to 157 (GGAGVGKT) is a binding site for ATP.

Belongs to the ATPase alpha/beta chains family. As to quaternary structure, F-type ATPases have 2 components, CF(1) - the catalytic core - and CF(0) - the membrane proton channel. CF(1) has five subunits: alpha(3), beta(3), gamma(1), delta(1), epsilon(1). CF(0) has three main subunits: a(1), b(2) and c(9-12). The alpha and beta chains form an alternating ring which encloses part of the gamma chain. CF(1) is attached to CF(0) by a central stalk formed by the gamma and epsilon chains, while a peripheral stalk is formed by the delta and b chains.

It localises to the cell inner membrane. The catalysed reaction is ATP + H2O + 4 H(+)(in) = ADP + phosphate + 5 H(+)(out). Functionally, produces ATP from ADP in the presence of a proton gradient across the membrane. The catalytic sites are hosted primarily by the beta subunits. The polypeptide is ATP synthase subunit beta (Erwinia tasmaniensis (strain DSM 17950 / CFBP 7177 / CIP 109463 / NCPPB 4357 / Et1/99)).